The primary structure comprises 404 residues: 1-deoxy-D-xylulose 5-phosphate reductoisomerase (404 aa).

Residues Thr10, Gly11, Ser12, Ile13, Gly36, Arg37, Asn38, and Asn124 each contribute to the NADPH site. Lys125 contributes to the 1-deoxy-D-xylulose 5-phosphate binding site. Glu126 is an NADPH binding site. Asp150 is a Mn(2+) binding site. 1-deoxy-D-xylulose 5-phosphate contacts are provided by Ser151, Glu152, Ser186, and His209. Glu152 contributes to the Mn(2+) binding site. Gly215 is an NADPH binding site. 1-deoxy-D-xylulose 5-phosphate is bound by residues Ser222, Asn227, Lys228, and Glu231. Glu231 serves as a coordination point for Mn(2+).

Belongs to the DXR family. As to quaternary structure, homodimer. Mg(2+) is required as a cofactor. The cofactor is Mn(2+).

It carries out the reaction 2-C-methyl-D-erythritol 4-phosphate + NADP(+) = 1-deoxy-D-xylulose 5-phosphate + NADPH + H(+). Its pathway is isoprenoid biosynthesis; isopentenyl diphosphate biosynthesis via DXP pathway; isopentenyl diphosphate from 1-deoxy-D-xylulose 5-phosphate: step 1/6. Its function is as follows. Catalyzes the NADPH-dependent rearrangement and reduction of 1-deoxy-D-xylulose-5-phosphate (DXP) to 2-C-methyl-D-erythritol 4-phosphate (MEP). The sequence is that of 1-deoxy-D-xylulose 5-phosphate reductoisomerase from Erwinia tasmaniensis (strain DSM 17950 / CFBP 7177 / CIP 109463 / NCPPB 4357 / Et1/99).